The chain runs to 94 residues: CRISPR-associated endoribonuclease Cas2 (94 aa).

Asp11 contributes to the Mg(2+) binding site.

Belongs to the CRISPR-associated endoribonuclease Cas2 protein family. As to quaternary structure, homodimer, forms a heterotetramer with a Cas1 homodimer. Mg(2+) is required as a cofactor.

Functionally, CRISPR (clustered regularly interspaced short palindromic repeat), is an adaptive immune system that provides protection against mobile genetic elements (viruses, transposable elements and conjugative plasmids). CRISPR clusters contain sequences complementary to antecedent mobile elements and target invading nucleic acids. CRISPR clusters are transcribed and processed into CRISPR RNA (crRNA). Functions as a ssRNA-specific endoribonuclease. Involved in the integration of spacer DNA into the CRISPR cassette. The chain is CRISPR-associated endoribonuclease Cas2 from Thermus thermophilus (strain ATCC 27634 / DSM 579 / HB8).